The chain runs to 499 residues: GTPase Der (499 aa).

2 consecutive EngA-type G domains span residues 3 to 166 and 213 to 386; these read PVVA…LETL and IKFA…QSAT. Residues 9-16, 56-60, 118-121, 219-226, 266-270, and 331-334 contribute to the GTP site; these read GRPNVGKS, DTGGI, NKTD, DTAGV, and NKWD. A KH-like domain is found at 387-471; that stretch reads RRTSTAMLTR…PIRVEFQESA (85 aa). The segment at 476–499 is disordered; sequence GRKNTMTLSQERQRKRLLKAKTKK. The span at 488-499 shows a compositional bias: basic residues; sequence QRKRLLKAKTKK.

It belongs to the TRAFAC class TrmE-Era-EngA-EngB-Septin-like GTPase superfamily. EngA (Der) GTPase family. Associates with the 50S ribosomal subunit.

In terms of biological role, GTPase that plays an essential role in the late steps of ribosome biogenesis. The protein is GTPase Der of Aeromonas salmonicida (strain A449).